Here is a 253-residue protein sequence, read N- to C-terminus: MRILLSNDDGVHAPGIQTLAKALREFADVQVVAPDRNRSGASNSLTLESSLRTFTFDNGDIAVQMGTPTDCVYLGVNALMRPRPDIVVSGINAGPNLGDDVIYSGTVAAAMEGRHLGFPALAVSLNGYQHYDTAAAVTCALLRGLSREPLRTGRILNVNVPDLPLAQIKGIRVTRCGSRHPADKVIPQEDPRGNTLYWIGPPGDKYDAGPDTDFAAVDEGYVSVTPLHVDLTAHSAHDVVSDWLDSVGVGTQW.

The a divalent metal cation site is built by D8, D9, S39, and N92.

This sequence belongs to the SurE nucleotidase family. The cofactor is a divalent metal cation.

It localises to the cytoplasm. It carries out the reaction a ribonucleoside 5'-phosphate + H2O = a ribonucleoside + phosphate. The catalysed reaction is a ribonucleoside 3'-phosphate + H2O = a ribonucleoside + phosphate. The enzyme catalyses [phosphate](n) + H2O = [phosphate](n-1) + phosphate + H(+). Functionally, nucleotidase with a broad substrate specificity as it can dephosphorylate various ribo- and deoxyribonucleoside 5'-monophosphates and ribonucleoside 3'-monophosphates with highest affinity to 3'-AMP. Also hydrolyzes polyphosphate (exopolyphosphatase activity) with the preference for short-chain-length substrates (P20-25). Might be involved in the regulation of dNTP and NTP pools, and in the turnover of 3'-mononucleotides produced by numerous intracellular RNases (T1, T2, and F) during the degradation of various RNAs. The chain is 5'/3'-nucleotidase SurE from Salmonella paratyphi B (strain ATCC BAA-1250 / SPB7).